A 350-amino-acid polypeptide reads, in one-letter code: Histidinol-phosphate aminotransferase (350 aa).

K220 bears the N6-(pyridoxal phosphate)lysine mark.

Belongs to the class-II pyridoxal-phosphate-dependent aminotransferase family. Histidinol-phosphate aminotransferase subfamily. Homodimer. Requires pyridoxal 5'-phosphate as cofactor.

The catalysed reaction is L-histidinol phosphate + 2-oxoglutarate = 3-(imidazol-4-yl)-2-oxopropyl phosphate + L-glutamate. It participates in amino-acid biosynthesis; L-histidine biosynthesis; L-histidine from 5-phospho-alpha-D-ribose 1-diphosphate: step 7/9. This chain is Histidinol-phosphate aminotransferase, found in Macrococcus caseolyticus (strain JCSC5402) (Macrococcoides caseolyticum).